Consider the following 34-residue polypeptide: Photosystem II reaction center protein M (34 aa).

A helical membrane pass occupies residues 5-25 (ILGLMAVALFILIPTSFLLIL).

It belongs to the PsbM family. In terms of assembly, PSII is composed of 1 copy each of membrane proteins PsbA, PsbB, PsbC, PsbD, PsbE, PsbF, PsbH, PsbI, PsbJ, PsbK, PsbL, PsbM, PsbT, PsbX, PsbY, PsbZ, Psb30/Ycf12, at least 3 peripheral proteins of the oxygen-evolving complex and a large number of cofactors. It forms dimeric complexes.

It is found in the plastid. The protein localises to the chloroplast thylakoid membrane. Its function is as follows. One of the components of the core complex of photosystem II (PSII). PSII is a light-driven water:plastoquinone oxidoreductase that uses light energy to abstract electrons from H(2)O, generating O(2) and a proton gradient subsequently used for ATP formation. It consists of a core antenna complex that captures photons, and an electron transfer chain that converts photonic excitation into a charge separation. This subunit is found at the monomer-monomer interface. This chain is Photosystem II reaction center protein M, found in Tupiella akineta (Green alga).